Consider the following 715-residue polypeptide: Fatty acid oxidation complex subunit alpha (715 aa).

Residues 1-190 are enoyl-CoA hydratase; that stretch reads MTTTSAFMLN…KAGLVDDVVP (190 aa). The segment at 306–715 is 3-hydroxyacyl-CoA dehydrogenase; the sequence is GPLNSVGILG…WTNGETDQGN (410 aa).

In the N-terminal section; belongs to the enoyl-CoA hydratase/isomerase family. This sequence in the central section; belongs to the 3-hydroxyacyl-CoA dehydrogenase family. Heterotetramer of two alpha chains (FadJ) and two beta chains (FadI).

The protein resides in the cytoplasm. The catalysed reaction is a (3S)-3-hydroxyacyl-CoA = a (2E)-enoyl-CoA + H2O. It carries out the reaction a 4-saturated-(3S)-3-hydroxyacyl-CoA = a (3E)-enoyl-CoA + H2O. The enzyme catalyses a (3S)-3-hydroxyacyl-CoA + NAD(+) = a 3-oxoacyl-CoA + NADH + H(+). It catalyses the reaction (3S)-3-hydroxybutanoyl-CoA = (3R)-3-hydroxybutanoyl-CoA. The protein operates within lipid metabolism; fatty acid beta-oxidation. Its function is as follows. Catalyzes the formation of a hydroxyacyl-CoA by addition of water on enoyl-CoA. Also exhibits 3-hydroxyacyl-CoA epimerase and 3-hydroxyacyl-CoA dehydrogenase activities. The polypeptide is Fatty acid oxidation complex subunit alpha (Salmonella agona (strain SL483)).